We begin with the raw amino-acid sequence, 509 residues long: Taxoid 14-beta-hydroxylase (509 aa).

Helical transmembrane passes span 20–40, 186–206, and 218–238; these read AILF…LLFL, SVVA…FFNI, and LLEI…GFAY. Residue cysteine 443 coordinates heme.

Belongs to the cytochrome P450 family.

It is found in the microsome membrane. The catalysed reaction is 10beta-hydroxytaxa-4(20),11-dien-5alpha-yl acetate + NADPH + O2 + H(+) = 10beta,14beta-dihydroxytaxa-4(20),11-dien-5alpha-yl acetate + NADP(+) + H2O. The protein operates within alkaloid biosynthesis; taxol biosynthesis. Catalyzes the conversion of 5-alpha-acetoxy-10beta-ol to 5-alpha-acetoxy-10beta,14beta-dihydroxy taxadiene. Also acts on taxa-4(20),11-dien-5-alpha-yl acetate. The protein is Taxoid 14-beta-hydroxylase of Taxus cuspidata (Japanese yew).